We begin with the raw amino-acid sequence, 225 residues long: Ribosomal RNA small subunit methyltransferase G (225 aa).

S-adenosyl-L-methionine-binding positions include glycine 71, leucine 76, 121–122 (AE), and arginine 139. The disordered stretch occupies residues 204–225 (VVEARRATPSNGRGRPGRSSRR).

Belongs to the methyltransferase superfamily. RNA methyltransferase RsmG family.

It localises to the cytoplasm. Specifically methylates the N7 position of guanine in position 518 of 16S rRNA. This Mycobacterium sp. (strain JLS) protein is Ribosomal RNA small subunit methyltransferase G.